The following is a 223-amino-acid chain: Urease accessory protein UreF (223 aa).

It belongs to the UreF family. As to quaternary structure, ureD, UreF and UreG form a complex that acts as a GTP-hydrolysis-dependent molecular chaperone, activating the urease apoprotein by helping to assemble the nickel containing metallocenter of UreC. The UreE protein probably delivers the nickel.

It localises to the cytoplasm. In terms of biological role, required for maturation of urease via the functional incorporation of the urease nickel metallocenter. This Rhizobium etli (strain CIAT 652) protein is Urease accessory protein UreF.